The sequence spans 332 residues: Adenosine deaminase (332 aa).

His12 and His14 together coordinate Zn(2+). Residues His14, Asp16, and Gly170 each coordinate substrate. Residue His197 participates in Zn(2+) binding. The active-site Proton donor is Glu200. Asp278 contributes to the Zn(2+) binding site.

Belongs to the metallo-dependent hydrolases superfamily. Adenosine and AMP deaminases family. Adenosine deaminase subfamily. It depends on Zn(2+) as a cofactor.

It catalyses the reaction adenosine + H2O + H(+) = inosine + NH4(+). The enzyme catalyses 2'-deoxyadenosine + H2O + H(+) = 2'-deoxyinosine + NH4(+). Functionally, catalyzes the hydrolytic deamination of adenosine and 2-deoxyadenosine. The protein is Adenosine deaminase of Clostridium perfringens (strain ATCC 13124 / DSM 756 / JCM 1290 / NCIMB 6125 / NCTC 8237 / Type A).